Reading from the N-terminus, the 145-residue chain is RING-H2 finger protein ATL18 (145 aa).

The first 29 residues, 1–29 (MISMLFPRSPLCTAAIVFYTCVCIPLGRL), serve as a signal peptide directing secretion. The RING-type; atypical zinc finger occupies 62 to 105 (CPICLVEFEAEDAVTHLPRCAHLFHINCIEPWLLRGHLTCPLCR). A helical transmembrane segment spans residues 125-145 (STLYLSIFFFFCIFLHLLGYL).

It belongs to the RING-type zinc finger family. ATL subfamily.

Its subcellular location is the membrane. It carries out the reaction S-ubiquitinyl-[E2 ubiquitin-conjugating enzyme]-L-cysteine + [acceptor protein]-L-lysine = [E2 ubiquitin-conjugating enzyme]-L-cysteine + N(6)-ubiquitinyl-[acceptor protein]-L-lysine.. It functions in the pathway protein modification; protein ubiquitination. The chain is RING-H2 finger protein ATL18 (ATL18) from Arabidopsis thaliana (Mouse-ear cress).